Reading from the N-terminus, the 183-residue chain is Translation initiation factor IF-3 (183 aa).

It belongs to the IF-3 family. In terms of assembly, monomer.

Its subcellular location is the cytoplasm. In terms of biological role, IF-3 binds to the 30S ribosomal subunit and shifts the equilibrium between 70S ribosomes and their 50S and 30S subunits in favor of the free subunits, thus enhancing the availability of 30S subunits on which protein synthesis initiation begins. This chain is Translation initiation factor IF-3, found in Vibrio cholerae serotype O1 (strain ATCC 39315 / El Tor Inaba N16961).